Consider the following 314-residue polypeptide: Olfactory receptor 9Q2 (314 aa).

Over Met-1–Val-25 the chain is Extracellular. N-linked (GlcNAc...) asparagine glycosylation is present at Asn-5. The helical transmembrane segment at Pro-26 to Ile-46 threads the bilayer. Topologically, residues Leu-47–Arg-54 are cytoplasmic. Residues Leu-55–Ser-75 traverse the membrane as a helical segment. At Ala-76–Ala-99 the chain is on the extracellular side. Residues Cys-97 and Cys-189 are joined by a disulfide bond. Residues Gln-100–Tyr-120 form a helical membrane-spanning segment. Over Asp-121–Lys-139 the chain is Cytoplasmic. Residues Ala-140 to Thr-160 traverse the membrane as a helical segment. The Extracellular segment spans residues Val-161–Val-197. The chain crosses the membrane as a helical span at residues Val-198–Ser-217. At Tyr-218–Thr-237 the chain is on the cytoplasmic side. The helical transmembrane segment at Phe-238–Met-258 threads the bilayer. At Tyr-259–Asp-271 the chain is on the extracellular side. The chain crosses the membrane as a helical span at residues Arg-272 to Leu-292. At Arg-293–Pro-314 the chain is on the cytoplasmic side.

The protein belongs to the G-protein coupled receptor 1 family.

It localises to the cell membrane. Functionally, odorant receptor. This Homo sapiens (Human) protein is Olfactory receptor 9Q2 (OR9Q2).